We begin with the raw amino-acid sequence, 444 residues long: Exodeoxyribonuclease 7 large subunit (444 aa).

The protein belongs to the XseA family. As to quaternary structure, heterooligomer composed of large and small subunits.

Its subcellular location is the cytoplasm. The enzyme catalyses Exonucleolytic cleavage in either 5'- to 3'- or 3'- to 5'-direction to yield nucleoside 5'-phosphates.. Its function is as follows. Bidirectionally degrades single-stranded DNA into large acid-insoluble oligonucleotides, which are then degraded further into small acid-soluble oligonucleotides. In Rickettsia conorii (strain ATCC VR-613 / Malish 7), this protein is Exodeoxyribonuclease 7 large subunit.